A 208-amino-acid polypeptide reads, in one-letter code: Superoxide dismutase [Mn] 2 (208 aa).

Mn(2+) is bound by residues His28, His83, Asp165, and His169.

The protein belongs to the iron/manganese superoxide dismutase family. In terms of assembly, homodimer. Requires Mn(2+) as cofactor.

It catalyses the reaction 2 superoxide + 2 H(+) = H2O2 + O2. Functionally, destroys superoxide anion radicals which are normally produced within the cells and which are toxic to biological systems. This Bacillus cereus (strain ATCC 14579 / DSM 31 / CCUG 7414 / JCM 2152 / NBRC 15305 / NCIMB 9373 / NCTC 2599 / NRRL B-3711) protein is Superoxide dismutase [Mn] 2 (sodA2).